The chain runs to 396 residues: Elongation factor Tu 2 (396 aa).

The 197-residue stretch at 10-206 (KLHVNVGTIG…ALDTFIPDPT (197 aa)) folds into the tr-type G domain. The G1 stretch occupies residues 19 to 26 (GHVDHGKT). Residue 19–26 (GHVDHGKT) participates in GTP binding. Residue Thr-26 coordinates Mg(2+). A G2 region spans residues 60–64 (GITIS). The tract at residues 81–84 (DCPG) is G3. GTP contacts are provided by residues 81 to 85 (DCPGH) and 136 to 139 (NKAD). The G4 stretch occupies residues 136 to 139 (NKAD). The G5 stretch occupies residues 174–176 (SAR).

This sequence belongs to the TRAFAC class translation factor GTPase superfamily. Classic translation factor GTPase family. EF-Tu/EF-1A subfamily. In terms of assembly, monomer.

It localises to the cytoplasm. It carries out the reaction GTP + H2O = GDP + phosphate + H(+). Functionally, GTP hydrolase that promotes the GTP-dependent binding of aminoacyl-tRNA to the A-site of ribosomes during protein biosynthesis. The polypeptide is Elongation factor Tu 2 (Xanthomonas campestris pv. campestris (strain 8004)).